The primary structure comprises 239 residues: tRNA (guanine-N(7)-)-methyltransferase (239 aa).

The S-adenosyl-L-methionine site is built by Glu69, Glu94, Asp121, and Asp144. Asp144 is a catalytic residue. Residues Lys148, Asp180, and 217–220 (TKFE) each bind substrate.

The protein belongs to the class I-like SAM-binding methyltransferase superfamily. TrmB family. Monomer.

It catalyses the reaction guanosine(46) in tRNA + S-adenosyl-L-methionine = N(7)-methylguanosine(46) in tRNA + S-adenosyl-L-homocysteine. Its pathway is tRNA modification; N(7)-methylguanine-tRNA biosynthesis. Functionally, catalyzes the formation of N(7)-methylguanine at position 46 (m7G46) in tRNA. In Buchnera aphidicola subsp. Acyrthosiphon pisum (strain Tuc7), this protein is tRNA (guanine-N(7)-)-methyltransferase.